Consider the following 123-residue polypeptide: Phosphoribosyl-AMP cyclohydrolase (123 aa).

Asp-81 is a Mg(2+) binding site. Cys-82 is a binding site for Zn(2+). 2 residues coordinate Mg(2+): Asp-83 and Asp-85. The Zn(2+) site is built by Cys-98 and Cys-105.

Belongs to the PRA-CH family. As to quaternary structure, homodimer. Mg(2+) is required as a cofactor. Requires Zn(2+) as cofactor.

It localises to the cytoplasm. It catalyses the reaction 1-(5-phospho-beta-D-ribosyl)-5'-AMP + H2O = 1-(5-phospho-beta-D-ribosyl)-5-[(5-phospho-beta-D-ribosylamino)methylideneamino]imidazole-4-carboxamide. It functions in the pathway amino-acid biosynthesis; L-histidine biosynthesis; L-histidine from 5-phospho-alpha-D-ribose 1-diphosphate: step 3/9. Catalyzes the hydrolysis of the adenine ring of phosphoribosyl-AMP. The protein is Phosphoribosyl-AMP cyclohydrolase of Nocardioides sp. (strain ATCC BAA-499 / JS614).